Here is a 467-residue protein sequence, read N- to C-terminus: Cytochrome c-552 (467 aa).

The signal sequence occupies residues 1 to 27 (MMKKMTGKSFALSALVAASFMAAGAMA). His-87 is a heme c binding site. Residues Cys-115, Cys-118, and Lys-119 each contribute to the heme site. Residues Cys-153, Cys-156, His-157, Cys-195, Cys-198, and His-199 each contribute to the heme c site. Residues Glu-201, Tyr-202, Lys-250, and Gln-252 each coordinate Ca(2+). Tyr-202 lines the substrate pocket. His-253 is a substrate binding site. 9 residues coordinate heme c: His-264, Cys-271, Cys-274, His-275, His-290, Cys-303, Cys-306, His-307, and His-382.

The protein belongs to the cytochrome c-552 family. Requires Ca(2+) as cofactor. It depends on heme c as a cofactor.

The protein localises to the periplasm. It carries out the reaction 6 Fe(III)-[cytochrome c] + NH4(+) + 2 H2O = 6 Fe(II)-[cytochrome c] + nitrite + 8 H(+). It participates in nitrogen metabolism; nitrate reduction (assimilation). Catalyzes the reduction of nitrite to ammonia, consuming six electrons in the process. The sequence is that of Cytochrome c-552 from Shewanella sp. (strain W3-18-1).